A 968-amino-acid chain; its full sequence is MDTVKSINKGYGKVDETQDLALKRKTRKRLYQIGISVAVLVAIIISSTVTIAIHSRKGNSPHPTPSSVPELTPAASLKTVCSVTNYPVSCFSSISKLPLSNTTDPEVIFRLSLQVVIDELNSIVELPKKLAEETDDEGLKSALSVCEHLLDLAIDRVNETVSAMEVVDGKKILNAATIDDLLTWLSAAVTYHGTCLDALDEISHTNSAIPLKLKSGMVNSTEFTSNSLAIVAKILSTISDFGIPIHGRRLLNSSPHATPISVPKLTPAASLRNVCSVTRYPASCVSSISKLPSSNTTDPEALFRLSLQVVINELNSIAGLPKKLAEETDDERLKSSLSVCGDVFNDAIDIVNDTISTMEEVGDGKKILKSSTIDEIQTWLSAAVTDHDTCLDALDELSQNKTEYANSPISLKLKSAMVNSRKFTSNSLAIIAKFPIHERHGVQSPRLRKSPHPTPSSVLRTVCNVTNYPASCISSISKLPLSKTTTDPKVLFRLSLQVTFDELNSIVGLPKKLAEETNDEGLKSALSVCADVFDLAVDSVNDTISSLDEVISGGKKNLNSSTIGDLITWLSSAVTDIGTCGDTLDEDNYNSPIPQKLKSAMVNSTEFTSNSLAIVAQVLKKPSKSRIPVQGRRLLNSNSFPNWVRPGVRRLLQAKNLTPHVTVAADGSGDVRTVNEAVWRVPKKGKTMFVIYVKAGTYVENVLMKKDKWNVFIYGDGRDKTIISGSTNMVDGVRTFNTSTFATEGKGFMMKDMGIINTAGPEKHQAVAFRSDSDRSVYYRCSFDGYQDTLYTHSNRQYYRNCDVTGTVDFIFGAGTVVFQGCSIRPRQPLPNQFNTITAEGTQEANQNTGISIHQCTISPNGNVTATTYLGRPWKLFSKTVIMQSVIGSFVNPAGWIAWNSTYDPPPRTIFYREYKNSGPGSDLSKRVKWAGYKPISSDDEAARFTVKYFLRGDDNWIPKAVMGMPPL.

The chain crosses the membrane as a helical span at residues 33 to 53 (IGISVAVLVAIIISSTVTIAI). The pectinesterase inhibitor 26 A stretch occupies residues 71 to 230 (LTPAASLKTV…TEFTSNSLAI (160 aa)). 10 N-linked (GlcNAc...) asparagine glycosylation sites follow: Asn-101, Asn-158, Asn-219, Asn-295, Asn-352, Asn-400, Asn-464, Asn-541, Asn-559, and Asn-603. A pectinesterase inhibitor 26 B region spans residues 265–430 (LTPAASLRNV…RKFTSNSLAI (166 aa)). Residues 453 to 614 (PTPSSVLRTV…TEFTSNSLAI (162 aa)) form a pectinesterase inhibitor 26 C region. Positions 660 to 954 (HVTVAADGSG…FTVKYFLRGD (295 aa)) are pectinesterase 26. Thr-735 provides a ligand contact to substrate. N-linked (GlcNAc...) asparagine glycosylation occurs at Asn-737. Gln-765 is a binding site for substrate. Asp-788 functions as the Proton donor; for pectinesterase activity in the catalytic mechanism. Cysteines 802 and 822 form a disulfide. Asp-809 serves as the catalytic Nucleophile; for pectinesterase activity. A glycan (N-linked (GlcNAc...) asparagine) is linked at Asn-863. Substrate is bound by residues Arg-872 and Trp-874. Asn-900 carries an N-linked (GlcNAc...) asparagine glycan.

The protein in the N-terminal section; belongs to the PMEI family. This sequence in the C-terminal section; belongs to the pectinesterase family. Expressed in flowers.

Its subcellular location is the membrane. The catalysed reaction is [(1-&gt;4)-alpha-D-galacturonosyl methyl ester](n) + n H2O = [(1-&gt;4)-alpha-D-galacturonosyl](n) + n methanol + n H(+). The protein operates within glycan metabolism; pectin degradation; 2-dehydro-3-deoxy-D-gluconate from pectin: step 1/5. Its function is as follows. Acts in the modification of cell walls via demethylesterification of cell wall pectin. This Arabidopsis thaliana (Mouse-ear cress) protein is Putative pectinesterase/pectinesterase inhibitor 26 (PME26).